A 63-amino-acid chain; its full sequence is Large ribosomal subunit protein uL30 (63 aa).

The protein belongs to the universal ribosomal protein uL30 family. In terms of assembly, part of the 50S ribosomal subunit.

This Xanthomonas campestris pv. campestris (strain 8004) protein is Large ribosomal subunit protein uL30.